The sequence spans 290 residues: uncharacterized protein (290 aa).

Transmembrane regions (helical) follow at residues 10-27 (FFVA…LLLI), 32-54 (VNYI…YFFS), 69-91 (ILVP…GVLI), 100-117 (VLAG…FFYF), and 121-143 (YLLM…NFEY). Residues 147 to 183 (VGKERKRILKLKKNYHKLLKEFSNFEREKRMFSNLRK) adopt a coiled-coil conformation.

It is found in the cell membrane. This is an uncharacterized protein from Aquifex aeolicus (strain VF5).